A 1978-amino-acid chain; its full sequence is Dedicator of cytokinesis protein 4 (1978 aa).

In terms of domain architecture, SH3 spans 6-67 (EHEKYGVVIA…PSSYVHLKNA (62 aa)). Y167 carries the post-translational modification Phosphotyrosine. T193 is subject to Phosphothreonine. Residues 401–574 (RNDLYITVER…ESFWITSFLC (174 aa)) enclose the C2 DOCK-type domain. Residues 1199–1605 (KTELNKEEMY…FGIQEFPACI (407 aa)) form the DOCKER domain. Phosphoserine is present on residues S1608, S1616, S1623, S1627, S1629, and S1640. Disordered regions lie at residues 1657-1738 (SQAS…IYPT) and 1751-1978 (IGDG…VSQL). The span at 1681 to 1712 (PSPSTSSLSSTHSASPNVTSSAPSSARASPLL) shows a compositional bias: low complexity. Residue S1778 is modified to Phosphoserine. An SH3-binding motif is present at residues 1797-1803 (PPVPPRP). Positions 1804–1818 (TQTASPARHTTSVSP) are enriched in polar residues. The segment covering 1842-1872 (SPGLSSNSPVLSGSYSSGISSLSRCSTSETS) has biased composition (low complexity). Positions 1873-1882 (GFENQANEQS) are enriched in polar residues. Positions 1885–1895 (VPVPVPVPVPV) are enriched in pro residues. A compositionally biased stretch (basic and acidic residues) spans 1953-1966 (SHLENGTRRTEPGP).

It belongs to the DOCK family. Interacts with nucleotide-free Rap1; functions as a guanine nucleotide exchange factor (GEF) for Rap1. Interacts (via DOCKER domain) with RAC1; functions as a guanine nucleotide exchange factor (GEF) for RAC1. Interacts with the SH3 domain of CRK. Interacts with FASLG. Interacts with ELMO2 and EPHA2; mediates activation of RAC1 by EPHA2. Interacts with USH1C (via PDZ 1 domain). As to expression, expressed in inner ear (at protein level).

The protein resides in the cell membrane. It localises to the cytoplasm. The protein localises to the cytosol. In terms of biological role, functions as a guanine nucleotide exchange factor (GEF) that promotes the exchange of GDP to GTP, converting inactive GDP-bound small GTPases into their active GTP-bound form. Involved in regulation of adherens junction between cells. Plays a role in cell migration. Has a higher guanine nucleotide exchange factor activity compared to other isoforms. The sequence is that of Dedicator of cytokinesis protein 4 (Dock4) from Mus musculus (Mouse).